We begin with the raw amino-acid sequence, 283 residues long: Putative F-box protein At1g60370 (283 aa).

Positions 4-53 (GEKLESIPIDLIIEIHSRLPAESVARFRCVSKLWGSMFRRPYFTELFLTR) constitute an F-box domain.

This is Putative F-box protein At1g60370 from Arabidopsis thaliana (Mouse-ear cress).